Reading from the N-terminus, the 360-residue chain is Histidinol-phosphate aminotransferase (360 aa).

Lys223 carries the N6-(pyridoxal phosphate)lysine modification.

Belongs to the class-II pyridoxal-phosphate-dependent aminotransferase family. Histidinol-phosphate aminotransferase subfamily. In terms of assembly, homodimer. Requires pyridoxal 5'-phosphate as cofactor.

It carries out the reaction L-histidinol phosphate + 2-oxoglutarate = 3-(imidazol-4-yl)-2-oxopropyl phosphate + L-glutamate. It participates in amino-acid biosynthesis; L-histidine biosynthesis; L-histidine from 5-phospho-alpha-D-ribose 1-diphosphate: step 7/9. The sequence is that of Histidinol-phosphate aminotransferase (hisC) from Bacillus subtilis (strain 168).